Here is a 206-residue protein sequence, read N- to C-terminus: Guanylate kinase (206 aa).

The region spanning 6 to 185 is the Guanylate kinase-like domain; that stretch reads GAILVLSGPS…AAKTLRIIAD (180 aa). 13 to 20 serves as a coordination point for ATP; it reads GPSGAGKS.

The protein belongs to the guanylate kinase family.

Its subcellular location is the cytoplasm. It catalyses the reaction GMP + ATP = GDP + ADP. Its function is as follows. Essential for recycling GMP and indirectly, cGMP. In Sulfurimonas denitrificans (strain ATCC 33889 / DSM 1251) (Thiomicrospira denitrificans (strain ATCC 33889 / DSM 1251)), this protein is Guanylate kinase.